A 397-amino-acid polypeptide reads, in one-letter code: MAKAKFERDKPHVNIGTIGHVDHGKTTLTAAITKVLHDKHPELNPFTPFDEIDKAPEEKQRGITIQIAHVEYQTEKRHYAHVDAPGHADYVKNMITGAAQMDGAILVVAATDGPMPQTREHVLLARQVGVPYILVALNKADMVDDEEIIELVEMEVRELLSAQEFPGDDVPVVRVSALKALEGDAEWGDKIMELLDAVDENVPDPERETDKPFLMPIEDVFSITGRGTVVTGRIERGVINVNEEVEMVGIKEKPLKTTVTGVEMFRKLLDQGQAGDNVGLLIRGIKREEVERGMVVVKPGTTTPHTEFEAQVYILSKDEGGRHTPFFNNYRPQFYFRTTDVTGVVTLPEGTEMVMPGDNTEMSVQLIQPIAMDEGLRFAIREGGRTVGAGRVTKIHK.

The 197-residue stretch at Lys10–Glu206 folds into the tr-type G domain. Residues Gly19–Thr26 form a G1 region. Residue Gly19 to Thr26 participates in GTP binding. Position 26 (Thr26) interacts with Mg(2+). The G2 stretch occupies residues Gly62–Gln66. The G3 stretch occupies residues Asp83–Gly86. GTP is bound by residues Asp83 to His87 and Asn138 to Asp141. The segment at Asn138–Asp141 is G4. The interval Ser176–Leu178 is G5.

The protein belongs to the TRAFAC class translation factor GTPase superfamily. Classic translation factor GTPase family. EF-Tu/EF-1A subfamily. In terms of assembly, monomer.

Its subcellular location is the cytoplasm. It carries out the reaction GTP + H2O = GDP + phosphate + H(+). Its function is as follows. GTP hydrolase that promotes the GTP-dependent binding of aminoacyl-tRNA to the A-site of ribosomes during protein biosynthesis. This Saccharopolyspora erythraea (strain ATCC 11635 / DSM 40517 / JCM 4748 / NBRC 13426 / NCIMB 8594 / NRRL 2338) protein is Elongation factor Tu.